We begin with the raw amino-acid sequence, 806 residues long: Glycerol-3-phosphate acyltransferase (806 aa).

The short motif at 305-310 is the HXXXXD motif element; it reads CHRSHM.

The protein belongs to the GPAT/DAPAT family.

Its subcellular location is the cell inner membrane. The enzyme catalyses sn-glycerol 3-phosphate + an acyl-CoA = a 1-acyl-sn-glycero-3-phosphate + CoA. Its pathway is phospholipid metabolism; CDP-diacylglycerol biosynthesis; CDP-diacylglycerol from sn-glycerol 3-phosphate: step 1/3. In Salmonella agona (strain SL483), this protein is Glycerol-3-phosphate acyltransferase.